Consider the following 369-residue polypeptide: MRN complex-interacting protein (369 aa).

At Ser-115 the chain carries Phosphoserine. Disordered regions lie at residues 122–150 (GGGV…PRKR), 209–245 (PSFT…PCPA), and 282–317 (AQAE…TPMP). A Nuclear localization signal (NLS) motif is present at residues 148-151 (RKRK). The segment covering 221–230 (KGRESSREDL) has biased composition (basic and acidic residues). The necessary for the association with the MRN complex stretch occupies residues 223 to 259 (RESSREDLDTMELVPRGEPPCPAQQVRTMSKWEQCLG).

Belongs to the MRNIP family. As to quaternary structure, associates with the MRE11-RAD50-NBN (MRN) damage-sensing complex; this association is constitutive. Interacts with MRE11. Interacts with NBN. Interacts with RAD50. Phosphorylated; phosphorylation is constitutive and occurs in the absence of any DNA-damaging stimulus. Phosphorylation on Ser-115 is necessary for its nuclear retention.

Its subcellular location is the nucleus. The protein localises to the nucleoplasm. Plays a role in the cellular response to DNA damage and the maintenance of genome stability through its association with the MRN damage-sensing complex. Promotes chromatin loading and activity of the MRN complex to facilitate subsequent ATM-mediated DNA damage response signaling and DNA repair. The sequence is that of MRN complex-interacting protein from Bos taurus (Bovine).